Consider the following 257-residue polypeptide: Granzyme M (257 aa).

The first 23 residues, 1–23, serve as a signal peptide directing secretion; it reads MEACVSSLLVLALGALSVGSSFG. The propeptide at 24–25 is activation peptide; that stretch reads TQ. A Peptidase S1 domain is found at 26 to 254; it reads IIGGREVIPH…YVSWIRKVTG (229 aa). C51 and C67 are oxidised to a cystine. Active-site charge relay system residues include H66 and D111. 3 disulfide bridges follow: C145–C213, C176–C192, and C203–C230. An N-linked (GlcNAc...) asparagine glycan is attached at N177. S207 (charge relay system) is an active-site residue.

The protein belongs to the peptidase S1 family. Granzyme subfamily. In terms of tissue distribution, highly and constitutively expressed in activated natural killer (NK) cells.

It localises to the secreted. The protein localises to the cytoplasmic granule. Functionally, cleaves peptide substrates after methionine, leucine, and norleucine. Physiological substrates include EZR, alpha-tubulins and the apoptosis inhibitor BIRC5/Survivin. Promotes caspase activation and subsequent apoptosis of target cells. This Homo sapiens (Human) protein is Granzyme M (GZMM).